Consider the following 249-residue polypeptide: NAD(P)H-quinone oxidoreductase subunit K 2 (249 aa).

Residues Cys-54, Cys-55, Cys-119, and Cys-150 each contribute to the [4Fe-4S] cluster site.

Belongs to the complex I 20 kDa subunit family. In terms of assembly, NDH-1 can be composed of about 15 different subunits; different subcomplexes with different compositions have been identified which probably have different functions. Requires [4Fe-4S] cluster as cofactor.

It is found in the cell inner membrane. It carries out the reaction a plastoquinone + NADH + (n+1) H(+)(in) = a plastoquinol + NAD(+) + n H(+)(out). The enzyme catalyses a plastoquinone + NADPH + (n+1) H(+)(in) = a plastoquinol + NADP(+) + n H(+)(out). In terms of biological role, NDH-1 shuttles electrons from an unknown electron donor, via FMN and iron-sulfur (Fe-S) centers, to quinones in the respiratory and/or the photosynthetic chain. The immediate electron acceptor for the enzyme in this species is believed to be plastoquinone. Couples the redox reaction to proton translocation, and thus conserves the redox energy in a proton gradient. Cyanobacterial NDH-1 also plays a role in inorganic carbon-concentration. This is NAD(P)H-quinone oxidoreductase subunit K 2 from Gloeobacter violaceus (strain ATCC 29082 / PCC 7421).